Consider the following 411-residue polypeptide: Tyrosine--tRNA ligase (411 aa).

An L-tyrosine-binding site is contributed by Tyr33. Residues 38 to 47 carry the 'HIGH' region motif; sequence PTADSLHLGN. Tyr160 and Gln164 together coordinate L-tyrosine. Residues 222–226 carry the 'KMSKS' region motif; the sequence is KFGKS. Position 225 (Lys225) interacts with ATP. One can recognise an S4 RNA-binding domain in the interval 346–410; sequence VNLVNFLVEN…GKKKILICKV (65 aa).

It belongs to the class-I aminoacyl-tRNA synthetase family. TyrS type 1 subfamily. Homodimer.

Its subcellular location is the cytoplasm. The catalysed reaction is tRNA(Tyr) + L-tyrosine + ATP = L-tyrosyl-tRNA(Tyr) + AMP + diphosphate + H(+). Its function is as follows. Catalyzes the attachment of tyrosine to tRNA(Tyr) in a two-step reaction: tyrosine is first activated by ATP to form Tyr-AMP and then transferred to the acceptor end of tRNA(Tyr). This is Tyrosine--tRNA ligase from Mycoplasmopsis synoviae (strain 53) (Mycoplasma synoviae).